Reading from the N-terminus, the 60-residue chain is MARLKVTQINSGIGRKQNQRETLRSLGLHKIGQSVVKDDKPEFRGMVNTVSHLVTVEEVD.

This sequence belongs to the universal ribosomal protein uL30 family. Part of the 50S ribosomal subunit.

In Kineococcus radiotolerans (strain ATCC BAA-149 / DSM 14245 / SRS30216), this protein is Large ribosomal subunit protein uL30.